Here is a 167-residue protein sequence, read N- to C-terminus: Zinc finger CCCH domain-containing protein 3 (167 aa).

A C3H1-type zinc finger spans residues 63 to 91 (AAAIGVCQHFVRTGTCKFGDSCRYFHPKP). Over residues 89 to 101 (PKPPPANPGPAPS) the composition is skewed to pro residues. The disordered stretch occupies residues 89–167 (PKPPPANPGP…YPPFPFVDWG (79 aa)). Residues 108-120 (MAQQSNIQGSQPN) are compositionally biased toward polar residues. The segment covering 149-167 (SLRPPPEGGYPPFPFVDWG) has biased composition (pro residues).

The protein is Zinc finger CCCH domain-containing protein 3 of Oryza sativa subsp. japonica (Rice).